The following is a 226-amino-acid chain: Ribonuclease 3 (226 aa).

Positions 7–129 (LPRLCRTLGY…IIGAVYLDAD (123 aa)) constitute an RNase III domain. Glu42 provides a ligand contact to Mg(2+). Asp46 is an active-site residue. Mg(2+) is bound by residues Asp115 and Glu118. Glu118 is an active-site residue. A DRBM domain is found at 156–226 (DAKTLLQEYL…AAQVLELLNQ (71 aa)).

The protein belongs to the ribonuclease III family. As to quaternary structure, homodimer. Mg(2+) is required as a cofactor.

The protein localises to the cytoplasm. It catalyses the reaction Endonucleolytic cleavage to 5'-phosphomonoester.. Its function is as follows. Digests double-stranded RNA. Involved in the processing of primary rRNA transcript to yield the immediate precursors to the large and small rRNAs (23S and 16S). Processes some mRNAs, and tRNAs when they are encoded in the rRNA operon. Processes pre-crRNA and tracrRNA of type II CRISPR loci if present in the organism. This chain is Ribonuclease 3, found in Shewanella amazonensis (strain ATCC BAA-1098 / SB2B).